Here is a 158-residue protein sequence, read N- to C-terminus: Fucolectin (158 aa).

The segment at K16 to V148 is F5/8 type C-like. N35, D38, N40, and S49 together coordinate Ca(2+). Disulfide bonds link C50-C146, C82-C83, and C108-C124. H52 and R79 together coordinate alpha-L-fucose. Positions R79–D81 match the Cell attachment site motif. R86 lines the alpha-L-fucose pocket. Ca(2+) is bound by residues C146 and E147.

It belongs to the fucolectin family. As to quaternary structure, homotrimer.

Its subcellular location is the secreted. In terms of biological role, acts as a defensive agent. Recognizes blood group fucosylated oligosaccharides including A, B, H and Lewis B-type antigens. Does not recognize Lewis A antigen and has low affinity for monovalent haptens. The sequence is that of Fucolectin from Anguilla anguilla (European freshwater eel).